A 540-amino-acid chain; its full sequence is MLFCDDSKKYLKEQNINLKNEFDKDDKRVEKFSLKHQNIYFDYSKNLINNYILKSLLESAEKSSLKDKIKQMFNGAKINSTEHRAVLHTALRDLSSTPLIVDGQDIRQEVTKEKQRVKELVEKVVSGRWRGFSGKKITDIVNIGIGGSDLGPKMVVRALQPYHCTDLKVHFVSNVDADSLLQALHVVDPETTLFIIASKSFSTEETLLNSISAREWLLDHYEDEKAVANHFVAISSKLDKVKEFGIDLEHCYKMWDWVGGRYSLWSSIGMSIAFAIGYDNFEKLLAGAYSVDKYFKETEFSKNIPVIMALLASYYSCTYNSQSQALLPYDERLCYFVDYLQQADMESNGKSVNIAGGTVNYQTGVVLWGGVGTNGQHAFHQLLHQGNIFIPVDFIAIATSHHNYDNHQQALLANCFAQSQALMFGQSYDMVYNELLKSGLNETQAKKLAAHKVIPGNRPSTTILLDELSPYSLGALIALYEHKIFVQGVLWDINSYDQWGVELGKKLGKNILKAMNDDSSDEYQNLDDSTRQLIAKVKNK.

Residue E346 is the Proton donor of the active site. Active-site residues include H377 and K505.

Belongs to the GPI family.

Its subcellular location is the cytoplasm. It carries out the reaction alpha-D-glucose 6-phosphate = beta-D-fructose 6-phosphate. The protein operates within carbohydrate biosynthesis; gluconeogenesis. Its pathway is carbohydrate degradation; glycolysis; D-glyceraldehyde 3-phosphate and glycerone phosphate from D-glucose: step 2/4. Its function is as follows. Catalyzes the reversible isomerization of glucose-6-phosphate to fructose-6-phosphate. The protein is Glucose-6-phosphate isomerase of Francisella tularensis subsp. holarctica (strain FTNF002-00 / FTA).